The primary structure comprises 480 residues: MKKNALWLLCILVLPAIACGRKPEKKVTISSSGRKEDDLVTGLPGQPPVNFKHYAGYVNLGPEQKQKALFYWFFEAQQNSSRRPLVLWLNGGPGCSSIAYGAAQELGPFLVHDNGGKLTYNHFSWNKEANMLFLEAPVGVGFSYTNNSMDLQKLGDEVTASDSLAFLINWFMKFPEFRSSEFYISGESYAGHYVPQLAEVIYDRNKKVTKDSSINLKGFMIGNAVINEATDMAGLVDYAWSHAIISDEVHTSIHGSCSFEEDTTNKTEQCYNNFKGFMDAYNDIDIYSIYTPVCLSSLLSSSPRKPKIVVSPRLLTFDDLWDKFPAGYDPCTESYAENYFNRKDVQVALHANVTNLPYPYSPCSGVIKRWSDAPSTMIPIIQKLLTGGLRIWIYSGDTDGRVPVTSTRYSIKKMGLKVESPWRSWFHKSQVAGWVETYAGGLNFVTVRGAGHQVPALAPAQSLTLFSHFISSVPLPSKRF.

Positions 1–20 are cleaved as a signal peptide; it reads MKKNALWLLCILVLPAIACG. Residues Asn-79 and Asn-146 are each glycosylated (N-linked (GlcNAc...) asparagine). Cystine bridges form between Cys-95–Cys-363, Cys-257–Cys-270, and Cys-294–Cys-331. Ser-188 is a catalytic residue. Residue Asn-265 is glycosylated (N-linked (GlcNAc...) asparagine). Residue Asn-352 is glycosylated (N-linked (GlcNAc...) asparagine). Active-site residues include Asp-399 and His-452.

It belongs to the peptidase S10 family. Expressed in seedlings, flowers and siliques.

The protein localises to the secreted. In terms of biological role, probable carboxypeptidase. The protein is Serine carboxypeptidase-like 35 (SCPL35) of Arabidopsis thaliana (Mouse-ear cress).